Reading from the N-terminus, the 78-residue chain is Translation initiation factor IF-1 (78 aa).

The 72-residue stretch at 1–72 folds into the S1-like domain; it reads MAKEAEMEFE…TRGRITYRKI (72 aa).

It belongs to the IF-1 family. As to quaternary structure, component of the 30S ribosomal translation pre-initiation complex which assembles on the 30S ribosome in the order IF-2 and IF-3, IF-1 and N-formylmethionyl-tRNA(fMet); mRNA recruitment can occur at any time during PIC assembly.

It is found in the cytoplasm. Its function is as follows. One of the essential components for the initiation of protein synthesis. Stabilizes the binding of IF-2 and IF-3 on the 30S subunit to which N-formylmethionyl-tRNA(fMet) subsequently binds. Helps modulate mRNA selection, yielding the 30S pre-initiation complex (PIC). Upon addition of the 50S ribosomal subunit IF-1, IF-2 and IF-3 are released leaving the mature 70S translation initiation complex. This is Translation initiation factor IF-1 from Mesoplasma florum (strain ATCC 33453 / NBRC 100688 / NCTC 11704 / L1) (Acholeplasma florum).